The chain runs to 131 residues: Single-stranded DNA-binding protein 2 (131 aa).

The SSB domain maps to 1–103 (MYNKVIMIGR…VLASSFQLLE (103 aa)). The short motif at 126–131 (EEELPF) is the Important for interaction with partner proteins element.

In terms of assembly, homotetramer.

Plays an important role in DNA replication, recombination and repair. Binds to ssDNA and to an array of partner proteins to recruit them to their sites of action during DNA metabolism. This is Single-stranded DNA-binding protein 2 (ssb2) from Streptococcus agalactiae serotype V (strain ATCC BAA-611 / 2603 V/R).